A 265-amino-acid polypeptide reads, in one-letter code: MKIAIFNNDAKNSQMITQSLVASLEKNGLTIDNQHPDIVITVGGDGTLLGAFQHYVDQIDTIRFVGLHTGHLGFYTDWLSTELANLVSSLTHDNGQRVSYPLLDMTVVHESGEQYHFLALNEAAIKQPVGTLVADIYLGGQLFERFRGDGIAVATPTGSTAYNKANGGAVLHPKLSAIQMSEIASINNRVFRTLGSPLVVPKGEEIIVKPKSNHFLVMYDQSEIKGRHINELRFRVADKQVHFAAYRHVDFWQRVHRAFINDIES.

The active-site Proton acceptor is the Asp-45. Residues 45–46 (DG), 121–122 (NE), Arg-147, Asp-149, Ala-184, and Gln-221 each bind NAD(+).

Belongs to the NAD kinase family. It depends on a divalent metal cation as a cofactor.

It is found in the cytoplasm. The enzyme catalyses NAD(+) + ATP = ADP + NADP(+) + H(+). Involved in the regulation of the intracellular balance of NAD and NADP, and is a key enzyme in the biosynthesis of NADP. Catalyzes specifically the phosphorylation on 2'-hydroxyl of the adenosine moiety of NAD to yield NADP. The protein is NAD kinase of Leuconostoc citreum (strain KM20).